Reading from the N-terminus, the 263-residue chain is Putative TATA-binding protein pB263R (263 aa).

The protein belongs to the asfivirus B263R family.

Functionally, putative TATA-binding protein. This Ornithodoros (relapsing fever ticks) protein is Putative TATA-binding protein pB263R.